The sequence spans 1178 residues: DNA-directed RNA polymerase I subunit 2 (1178 aa).

The segment at 1097–1137 adopts a C4-type zinc-finger fold; sequence CSLCGSLLTSSVVNVQQKKLIQEIGKLPPGRTPKKVTCYSC.

This sequence belongs to the RNA polymerase beta chain family. In terms of assembly, component of the RNA polymerase I (Pol I) complex consisting of at least 13 subunits.

It is found in the nucleus. It catalyses the reaction RNA(n) + a ribonucleoside 5'-triphosphate = RNA(n+1) + diphosphate. In terms of biological role, DNA-dependent RNA polymerase catalyzes the transcription of DNA into RNA using the four ribonucleoside triphosphates as substrates. Second largest core component of RNA polymerase I which synthesizes ribosomal RNA precursors. Proposed to contribute to the polymerase catalytic activity and forms the polymerase active center together with the largest subunit. Pol I is composed of mobile elements and NRPA2 is part of the core element with the central large cleft and probably a clamp element that moves to open and close the cleft. Functionally, essential for the completion of the three rounds of mitosis in female megaspores required for the development of mature gametophytes. The protein is DNA-directed RNA polymerase I subunit 2 of Arabidopsis thaliana (Mouse-ear cress).